Consider the following 466-residue polypeptide: GATA-binding factor 2 (466 aa).

Low complexity-rich tracts occupy residues 139-155 and 174-188; these read GSST…TPAS and PDPN…SSSA. The segment at 139–196 is disordered; the sequence is GSSTSSTASVSSLTPASHSGSHLFGFPPTPPKEVSPDPNSTSAASPSSSAGARQEDKD. 2 GATA-type zinc fingers span residues 281-305 and 335-359; these read CVNC…CNAC and CANC…CNAC. The tract at residues 436–466 is disordered; it reads GHILPTPTPIHPSSSISFGHPHPSSMVTAMG.

Expressed in all developmental stages of erythroid cells but is additionally found in a limited subset of other tissues.

Its subcellular location is the nucleus. In terms of biological role, transcriptional activator which probably serves as a general switch factor for cell-specific development. It binds to DNA sites with the consensus sequence 5'-[AT]GATA[AG]-3' within regulatory regions of genes. This is GATA-binding factor 2 (GATA2) from Gallus gallus (Chicken).